The following is a 414-amino-acid chain: 2,3-diketo-5-methylthiopentyl-1-phosphate enolase (414 aa).

Catalysis depends on Lys-99, which acts as the Proton acceptor. Substrate-binding positions include Lys-148, 174-177, His-265, Gly-338, and 360-361; these read KDDE and GG. Mg(2+) contacts are provided by Lys-174, Asp-176, and Glu-177. Lys-174 is modified (N6-carboxylysine).

Belongs to the RuBisCO large chain family. Type IV subfamily. As to quaternary structure, homodimer. Requires Mg(2+) as cofactor.

It catalyses the reaction 5-methylsulfanyl-2,3-dioxopentyl phosphate = 2-hydroxy-5-methylsulfanyl-3-oxopent-1-enyl phosphate. It participates in amino-acid biosynthesis; L-methionine biosynthesis via salvage pathway; L-methionine from S-methyl-5-thio-alpha-D-ribose 1-phosphate: step 3/6. Functionally, catalyzes the enolization of 2,3-diketo-5-methylthiopentyl-1-phosphate (DK-MTP-1-P) into 2-hydroxy-3-keto-5-methylthiopentenyl-1-phosphate (HK-MTPenyl-1-P). This chain is 2,3-diketo-5-methylthiopentyl-1-phosphate enolase, found in Bacillus thuringiensis (strain Al Hakam).